Reading from the N-terminus, the 691-residue chain is Hormonally up-regulated neu tumor-associated kinase homolog A (691 aa).

In terms of domain architecture, Protein kinase spans 55–313 (YLIGRKLGEG…IQQALANRWL (259 aa)). Residues 61-69 (LGEGSFAKV) and Lys-84 contribute to the ATP site. Residue Asp-179 is the Proton acceptor of the active site. Over residues 406 to 425 (MNKNSYEERRSKDLEKRGEP) the composition is skewed to basic and acidic residues. 4 disordered regions span residues 406-475 (MNKN…GGLS), 499-518 (QSPDPRTPKIMRRQDSHSQE), 580-640 (FQFD…SRGR), and 655-679 (QVVSPKGEKPLETRMPPLHQMSPGY). Residues 440–453 (SHRQNACLTPQGHS) show a composition bias toward polar residues. Over residues 457 to 470 (PVKERRSSKSERES) the composition is skewed to basic and acidic residues. Polar residues predominate over residues 582–597 (FDNTSPSKSHFNQASF). A compositionally biased stretch (low complexity) spans 604-620 (SPSSPESMSPTSPHSPS). The segment covering 621–631 (CNNNISGNLGS) has biased composition (polar residues).

This sequence belongs to the protein kinase superfamily. CAMK Ser/Thr protein kinase family. SNF1 subfamily.

The catalysed reaction is L-seryl-[protein] + ATP = O-phospho-L-seryl-[protein] + ADP + H(+). The enzyme catalyses L-threonyl-[protein] + ATP = O-phospho-L-threonyl-[protein] + ADP + H(+). This is Hormonally up-regulated neu tumor-associated kinase homolog A (hunk-a) from Xenopus laevis (African clawed frog).